The sequence spans 143 residues: Large ribosomal subunit protein uL11 (143 aa).

This sequence belongs to the universal ribosomal protein uL11 family. Part of the ribosomal stalk of the 50S ribosomal subunit. Interacts with L10 and the large rRNA to form the base of the stalk. L10 forms an elongated spine to which L12 dimers bind in a sequential fashion forming a multimeric L10(L12)X complex. In terms of processing, one or more lysine residues are methylated.

Its function is as follows. Forms part of the ribosomal stalk which helps the ribosome interact with GTP-bound translation factors. In Zymomonas mobilis subsp. mobilis (strain ATCC 31821 / ZM4 / CP4), this protein is Large ribosomal subunit protein uL11.